The sequence spans 499 residues: Neuronal acetylcholine receptor subunit alpha-3 (499 aa).

The first 25 residues, 1–25 (MGVVLLPPPLSMLMLVLMLLPAASA), serve as a signal peptide directing secretion. At 26–244 (SEAEHRLFQY…PLFYTINLII (219 aa)) the chain is on the extracellular side. N-linked (GlcNAc...) asparagine glycans are attached at residues Asn49 and Asn166. Disulfide bonds link Cys153–Cys167 and Cys217–Cys218. A helical membrane pass occupies residues 245–260 (PCLLISFLTVLVFYLP). Topologically, residues 261–262 (SD) are cytoplasmic. A helical transmembrane segment spans residues 263–279 (CGEKVTLCISVLLSLTV). Glu265 lines the Na(+) pocket. At 280–301 (FLLVITETIPSTSLVIPLIGEY) the chain is on the extracellular side. The chain crosses the membrane as a helical span at residues 302 to 320 (LLFTMIFVTLSIVITVFVL). Topologically, residues 321–468 (NVHYRTPTTH…QDDWKYVAMV (148 aa)) are cytoplasmic. Phosphoserine occurs at positions 407 and 410. The helical transmembrane segment at 469–487 (IDRIFLWVFILVCILGTAG) threads the bilayer. Topologically, residues 488–499 (LFLQPLMARDDT) are extracellular.

This sequence belongs to the ligand-gated ion channel (TC 1.A.9) family. Acetylcholine receptor (TC 1.A.9.1) subfamily. Alpha-3/CHRNA3 sub-subfamily. In terms of assembly, neuronal AChR is composed of two different types of subunits: alpha and beta. CHRNA3/Alpha-3 subunit can be combined to CHRNB2/beta-2 or CHRNB4/beta-4 to give rise to functional receptors. Part of a complex composed of STUB1/CHIP, VCP/p97, CHRNA3, and UBXN2A that modulates the ubiquitination and endoplasmic reticulum-associated degradation (ERAD) of CHRNA3. Within the complex UBXN2A acts as a scaffold protein required for the interaction of CHRNA3 with VCP/p97, this interaction also inhibits CHRNA3 ubiquitination by STUB1/CHIP and subsequently ERAD. Interacts with UBXN2A (via SEP domain), the interaction is required for the interaction of CHRNA3 in the STUB1:VCP:UBXN2A complex. Interacts with RIC3; which is required for proper folding and assembly. In terms of processing, ubiquitinated; by STUB1/CHIP and thereafter degraded by the 26S proteosome complex. Expressed in neurons. Expressed in umbrella cells of urothelium (at protein level).

Its subcellular location is the synaptic cell membrane. The protein localises to the cell membrane. It localises to the endoplasmic reticulum. The protein resides in the golgi apparatus. It catalyses the reaction Ca(2+)(in) = Ca(2+)(out). It carries out the reaction K(+)(in) = K(+)(out). The enzyme catalyses Na(+)(in) = Na(+)(out). With respect to regulation, activated by a myriad of ligands such as acetylcholine, cytisine, nicotine, choline and epibatidine. The heteropentamer CHRNA3:CHRNB2 activity is blocked by alpha-conotoxins ImI, ImII, PnIA, GID and MII. The heteropentamer CHRNA3:CHRNB4 activity is blocked by the alpha-conotoxin ImI and AuIB. In terms of biological role, component of neuronal acetylcholine receptors (nAChRs) that function as pentameric, ligand-gated cation channels with high calcium permeability among other activities. nAChRs are excitatory neurotrasnmitter receptors formed by a collection of nAChR subunits known to mediate synaptic transmission in the nervous system and the neuromuscular junction. Each nAchR subunit confers differential attributes to channel properties, including activation, deactivation and desensitization kinetics, pH sensitivity, cation permeability, and binding to allosteric modulators. CHRNA3 forms heteropentameric neuronal acetylcholine receptors with CHRNB2 and CHRNB4. CHRNA3:CHRNB4 being predominant in neurons of the autonomic ganglia, it is known as ganglionic nicotinic receptor. CHRNA3:CHRNB4 also plays an important role in the habenulo-interpeduncular tract, modulating the mesolimbic dopamine system and affecting reward circuits and addiction. Hypothalamic CHRNA3:CHRNB4 nAChR activation by nicotine leads to activation of POMC neurons and a decrease in food intake. Also expressed in the urothelium where it modulates reflex bladder activity by increasing intracellular calcium through extracellular influx and basal ATP release. The chain is Neuronal acetylcholine receptor subunit alpha-3 (Chrna3) from Rattus norvegicus (Rat).